Here is a 229-residue protein sequence, read N- to C-terminus: Growth factor receptor-bound protein 2 (229 aa).

2 consecutive SH3 domains span residues 1–58 and 168–227; these read MEAV…MKPH and QQPT…PVNR. The region spanning 60-171 is the SH2 domain; it reads WFFGKIPRAK…RATNLLQQPT (112 aa).

It localises to the nucleus. The protein localises to the cytoplasm. Its subcellular location is the endosome. The protein resides in the golgi apparatus. Adapter protein that provides a critical link between cell surface growth factor receptors and the Ras signaling pathway. Promotes meiotic reinitiation during oocyte maturation. This chain is Growth factor receptor-bound protein 2, found in Xenopus tropicalis (Western clawed frog).